Reading from the N-terminus, the 360-residue chain is DNA replication and repair protein RecF (360 aa).

33–40 (GENGSGKT) lines the ATP pocket.

It belongs to the RecF family.

The protein resides in the cytoplasm. The RecF protein is involved in DNA metabolism; it is required for DNA replication and normal SOS inducibility. RecF binds preferentially to single-stranded, linear DNA. It also seems to bind ATP. This is DNA replication and repair protein RecF from Rickettsia massiliae (strain Mtu5).